The sequence spans 309 residues: Anamorsin (309 aa).

Residues 6 to 172 (ISPGQLVAVF…KPNFEVGSSS (167 aa)) are N-terminal SAM-like domain. Residues 173–222 (QLKLLHKKSSSVKPVVDPATAKLWTLSANDMEDDSMDLIDSDELLDPEDL) are linker. Residues Ser182, Ser183, and Ser213 each carry the phosphoserine modification. Residues Cys235, Cys244, Cys247, and Cys249 each coordinate [2Fe-2S] cluster. Positions 235-249 (CGEGKKRKACKNCTC) are fe-S binding site A. Position 269 is a phosphoserine (Ser269). [4Fe-4S] cluster is bound by residues Cys271, Cys274, Cys282, and Cys285. Short sequence motifs (cx2C motif) lie at residues 271–274 (CGNC) and 282–285 (CANC). A fe-S binding site B region spans residues 271-285 (CGNCYLGDAFRCANC). Phosphoserine occurs at positions 302 and 304.

This sequence belongs to the anamorsin family. As to quaternary structure, monomer. Interacts with NDOR1. Interacts with CHCHD4. [2Fe-2S] cluster is required as a cofactor. [4Fe-4S] cluster serves as cofactor.

The protein resides in the cytoplasm. It localises to the nucleus. Its subcellular location is the mitochondrion intermembrane space. Its function is as follows. Component of the cytosolic iron-sulfur (Fe-S) protein assembly (CIA) machinery required for the maturation of extramitochondrial Fe-S proteins. Part of an electron transfer chain functioning in an early step of cytosolic Fe-S biogenesis, facilitating the de novo assembly of a [4Fe-4S] cluster on the scaffold complex NUBP1-NUBP2. Electrons are transferred to CIAPIN1 from NADPH via the FAD- and FMN-containing protein NDOR1. NDOR1-CIAPIN1 are also required for the assembly of the diferric tyrosyl radical cofactor of ribonucleotide reductase (RNR), probably by providing electrons for reduction during radical cofactor maturation in the catalytic small subunit. Has anti-apoptotic effects in the cell. Involved in negative control of cell death upon cytokine withdrawal. Promotes development of hematopoietic cells. The sequence is that of Anamorsin from Rattus norvegicus (Rat).